We begin with the raw amino-acid sequence, 1429 residues long: Protein lin-12 (1429 aa).

A signal peptide spans 1–15 (MRIPTICFLFLLISL). Residues 16-908 (SKSLHIGSCL…GNNTGFLSWN (893 aa)) lie on the Extracellular side of the membrane. 2 consecutive EGF-like domains span residues 20-61 (HIGS…EYCE) and 114-150 (TQGW…ERCE). 9 disulfide bridges follow: C24–C35, C29–C49, C51–C60, C118–C129, C123–C138, C140–C149, C156–C169, C163–C178, and C180–C189. N41 is a glycosylation site (N-linked (GlcNAc...) asparagine). The EGF-like 3; calcium-binding domain maps to 152–190 (DVNECEENKNACGNRSTCMNTLGTYICVCPQGFLPPDCL). A glycan (N-linked (GlcNAc...) asparagine) is linked at N165. An N-linked (GlcNAc...) asparagine glycan is attached at N194. 4 consecutive EGF-like domains span residues 201–246 (KQPV…STCE), 250–285 (KEDS…SYCQ), 287–323 (GKDN…PYCE), and 323–363 (EKMD…ILCE). 30 disulfides stabilise this stretch: C205/C227, C221/C234, C236/C245, C254/C264, C259/C273, C275/C284, C291/C302, C296/C311, C313/C322, C327/C339, C334/C351, C353/C362, C369/C381, C375/C390, C392/C401, C408/C419, C413/C429, C431/C440, C462/C475, C469/C480, C482/C491, C507/C518, C512/C529, C531/C540, C547/C558, C552/C567, C569/C578, C586/C597, C591/C607, and C609/C618. Residues 365–402 (DKNECLSENMCLNNGTCVNLPGSFRCDCARGFGGKWCD) enclose the EGF-like 8; calcium-binding domain. Residue N378 is glycosylated (N-linked (GlcNAc...) asparagine). EGF-like domains follow at residues 404–441 (PLNM…KRCE), 449–492 (GGVR…NQCE), 503–541 (SENL…DICE), 543–579 (HKDL…NGCE), and 582–619 (KMFR…ARCE). Residue N515 is glycosylated (N-linked (GlcNAc...) asparagine). An N-linked (GlcNAc...) asparagine glycan is attached at N623. 9 disulfides stabilise this stretch: C638-C661, C643-C656, C652-C668, C678-C702, C684-C697, C693-C709, C716-C742, C724-C737, and C733-C749. LNR repeat units lie at residues 638–674 (CEKR…KREP), 678–709 (CRYG…GMDC), and 716–754 (CPVK…NETN). 3 N-linked (GlcNAc...) asparagine glycosylation sites follow: N751, N754, and N900. Residues 909 to 931 (ALLLIGAGCLIVMVVLMLGALPG) traverse the membrane as a helical segment. At 932–1429 (NRTRKRRMIN…TRYSEPAHYF (498 aa)) the chain is on the cytoplasmic side. The interval 933 to 952 (RTRKRRMINASVWMPPMENE) is RAM domain. ANK repeat units lie at residues 1093-1122 (DENT…DPTI), 1126-1158 (SERS…DIEE), 1162-1194 (NGMT…KVDY), 1206-1236 (KGRT…NKDK), and 1240-1269 (DGKT…SVEA). Positions 1308 to 1374 (IQHTHQPQPS…TTHTTPTSLN (67 aa)) are disordered. The span at 1319-1330 (KVTRAPKKQTSR) shows a compositional bias: basic residues. The segment covering 1361–1374 (HFMNTTHTTPTSLN) has biased composition (polar residues).

Belongs to the NOTCH family. As to quaternary structure, may interact with dsl-1. May interact with lag-2. May interact with osm-11. Interacts with sel-10. When activated, the lin-12/Notch intracellular domain (NICD) can become a component of a complex consisting of at least the NICD, lag-1 and sel-8/lag-3. The NICD probably facilitates ordered assembly of the ternary complex via allosteric interactions of its RBP-j associated molecule (RAM) domain with lag-1. Upon binding its ligands, it is cleaved (S2 cleavage) in its extracellular domain, close to the transmembrane domain. S2 cleavage is probably mediated by the metalloproteases adm-4 and sup-17. It is then cleaved (S3 cleavage) downstream of its transmembrane domain, releasing it from the cell membrane; S3 cleavage requires a multiprotein gamma-secretase complex, which may include presenilin sel-12.

The protein localises to the apical cell membrane. The protein resides in the nucleus. Its function is as follows. Essential signaling protein which has a major role in many developmental processes; involved in cell fate decisions that require cell-cell interactions. Probable membrane-bound receptor for putative ligands lag-2, apx-1, dsl-1 and osm-11. Upon ligand activation, and releasing from the cell membrane, the lin-12/Notch intracellular domain (NICD) forms a transcriptional activator complex with lag-1 and lag-3 and regulates expression of various genes. Required for ventral cell fates in the postembryonic mesodermal lineage (M lineage) and in uterine precursor cells. Activity in cell fate decisions and tumorigenesis is negatively regulated by sel-10. Best known for involvement in cell-fate decisions during development, but also plays roles in other events. Regulates recovery from the dauer larval state. Modulates chemosensory avoidance of octanol and quiescence during molting. Promotes basement membrane mobility during tissue remodeling. Involved in establishing left-right asymmetry during intestinal organogenesis. The sequence is that of Protein lin-12 from Caenorhabditis elegans.